The following is a 142-amino-acid chain: Sorting nexin-3 (142 aa).

One can recognise a PX domain in the interval 21-138 (NFLEIEVRNP…ASFIQDPNWD (118 aa)). A 1,2-diacyl-sn-glycero-3-phospho-(1D-myo-inositol-3-phosphate)-binding residues include R64, S66, K90, R95, and R104.

It belongs to the sorting nexin family.

The protein localises to the cytoplasm. Its subcellular location is the golgi apparatus membrane. The protein resides in the prevacuolar compartment membrane. Required for retention of late Golgi membrane proteins. Component of the retrieval machinery that functions by direct interaction with the cytosolic tails of certain TGN membrane proteins during the sorting/budding process at the prevacuolar compartment. Binds phosphatidylinositol 3-phosphate (PtdIns(P3)). The chain is Sorting nexin-3 (snx3) from Aspergillus fumigatus (strain ATCC MYA-4609 / CBS 101355 / FGSC A1100 / Af293) (Neosartorya fumigata).